A 265-amino-acid chain; its full sequence is Hydroxyethylthiazole kinase (265 aa).

Methionine 50 lines the substrate pocket. ATP contacts are provided by arginine 125 and threonine 171. Glycine 198 lines the substrate pocket.

It belongs to the Thz kinase family. It depends on Mg(2+) as a cofactor.

The catalysed reaction is 5-(2-hydroxyethyl)-4-methylthiazole + ATP = 4-methyl-5-(2-phosphooxyethyl)-thiazole + ADP + H(+). It functions in the pathway cofactor biosynthesis; thiamine diphosphate biosynthesis; 4-methyl-5-(2-phosphoethyl)-thiazole from 5-(2-hydroxyethyl)-4-methylthiazole: step 1/1. In terms of biological role, catalyzes the phosphorylation of the hydroxyl group of 4-methyl-5-beta-hydroxyethylthiazole (THZ). The sequence is that of Hydroxyethylthiazole kinase from Cronobacter sakazakii (strain ATCC BAA-894) (Enterobacter sakazakii).